A 423-amino-acid chain; its full sequence is AUGMIN subunit 4 (423 aa).

Residues 267–287 (IEEIERDEAALREDLYSADRK) adopt a coiled-coil conformation.

This sequence belongs to the HAUS4 family. Part of the augmin complex composed of 8 subunits. The complex acts on microtubules and interacts with gamma-tubulin in spindles and the phragmoplast.

The protein localises to the cytoplasm. It is found in the cytoskeleton. It localises to the spindle. The protein resides in the phragmoplast. In terms of biological role, involved in microtubules reorganization during spindle and phragmoplast development. In Arabidopsis thaliana (Mouse-ear cress), this protein is AUGMIN subunit 4 (AUG4).